Here is a 496-residue protein sequence, read N- to C-terminus: COP9 signalosome complex subunit 3 (496 aa).

The region spanning 243–411 (QASHCLGIVI…GNETTTMLRF (169 aa)) is the PCI domain. Positions 468 to 496 (GSSERSGVVGSTEADGGGDLDEDLMGDGR) are disordered. The span at 483 to 496 (GGGDLDEDLMGDGR) shows a compositional bias: acidic residues.

This sequence belongs to the CSN3 family. As to quaternary structure, component of the COP9 signalosome (CSN) complex.

The protein localises to the cytoplasm. Its subcellular location is the nucleus. Its function is as follows. Component of the COP9 signalosome (CSN) complex that acts as an regulator of the ubiquitin (Ubl) conjugation pathway by mediating the deneddylation of the cullin subunit of SCF-type E3 ubiquitin-protein ligase complexes. The CSN complex seems to link protein degradation to sexual development. The chain is COP9 signalosome complex subunit 3 (csnC) from Emericella nidulans (strain FGSC A4 / ATCC 38163 / CBS 112.46 / NRRL 194 / M139) (Aspergillus nidulans).